A 252-amino-acid chain; its full sequence is Large ribosomal subunit protein uL10m (252 aa).

The N-terminal 24 residues, 1–24 (MAATLCCRLLPKAGWVPLTQSVRH), are a transit peptide targeting the mitochondrion.

It belongs to the universal ribosomal protein uL10 family. As to quaternary structure, component of the mitochondrial ribosome large subunit (39S) which comprises a 16S rRNA and about 50 distinct proteins.

It localises to the mitochondrion. This chain is Large ribosomal subunit protein uL10m (mrpl10), found in Danio rerio (Zebrafish).